The chain runs to 213 residues: Pyridoxine/pyridoxamine 5'-phosphate oxidase (213 aa).

FMN contacts are provided by residues 60–65, 75–76, K82, and Q104; these read RMVLMK and YS. K65 contacts substrate. The substrate site is built by Y122 and R126. Residues 139 to 140 and W184 each bind FMN; that span reads QS. 190-192 is a substrate binding site; that stretch reads RLH. Position 194 (R194) interacts with FMN.

It belongs to the pyridoxamine 5'-phosphate oxidase family. Homodimer. Requires FMN as cofactor.

It catalyses the reaction pyridoxamine 5'-phosphate + O2 + H2O = pyridoxal 5'-phosphate + H2O2 + NH4(+). It carries out the reaction pyridoxine 5'-phosphate + O2 = pyridoxal 5'-phosphate + H2O2. It participates in cofactor metabolism; pyridoxal 5'-phosphate salvage; pyridoxal 5'-phosphate from pyridoxamine 5'-phosphate: step 1/1. The protein operates within cofactor metabolism; pyridoxal 5'-phosphate salvage; pyridoxal 5'-phosphate from pyridoxine 5'-phosphate: step 1/1. In terms of biological role, catalyzes the oxidation of either pyridoxine 5'-phosphate (PNP) or pyridoxamine 5'-phosphate (PMP) into pyridoxal 5'-phosphate (PLP). The protein is Pyridoxine/pyridoxamine 5'-phosphate oxidase of Rhodopseudomonas palustris (strain BisA53).